Consider the following 560-residue polypeptide: Ubiquitin carboxyl-terminal hydrolase MINDY-3 homolog (560 aa).

Basic and acidic residues predominate over residues 1 to 13 (MNEKIVREQRGGE). Disordered regions lie at residues 1–30 (MNEKIVREQRGGEDSPSSVSAKSATAAASA) and 44–91 (SHKT…MLNA). 2 stretches are compositionally biased toward low complexity: residues 15–30 (SPSSVSAKSATAAASA) and 52–81 (TASSSPRTSGASASASSSSRSASAPASSSS). The active-site Nucleophile is the Cys-139. The tract at residues 203 to 237 (TEAGSTKKRSPAGEEESALAGQAAGSSEEVEEAAE) is disordered. A phosphoserine mark is found at Ser-212 and Ser-219. Residue His-403 is the Proton acceptor of the active site.

It belongs to the MINDY deubiquitinase family. FAM188 subfamily.

It catalyses the reaction Thiol-dependent hydrolysis of ester, thioester, amide, peptide and isopeptide bonds formed by the C-terminal Gly of ubiquitin (a 76-residue protein attached to proteins as an intracellular targeting signal).. Its function is as follows. Hydrolase that can remove 'Lys-48'-linked conjugated ubiquitin from proteins. This is Ubiquitin carboxyl-terminal hydrolase MINDY-3 homolog (mindy3) from Drosophila melanogaster (Fruit fly).